A 131-amino-acid polypeptide reads, in one-letter code: MNIIQQLEQEEIAKLNKTIPDFEPGDTVIVNVKVKEGERTRVQAYEGVCIGRSGSGLNENFTVRKISYGEGVERVFPIYSPMIDSIKVTRRGKVRRAKLYYLRDRRGKSARIAERAERGSDKGKAAPAAAE.

Positions 107-131 are disordered; sequence GKSARIAERAERGSDKGKAAPAAAE. A compositionally biased stretch (basic and acidic residues) spans 111–124; the sequence is RIAERAERGSDKGK.

This sequence belongs to the bacterial ribosomal protein bL19 family.

This protein is located at the 30S-50S ribosomal subunit interface and may play a role in the structure and function of the aminoacyl-tRNA binding site. The protein is Large ribosomal subunit protein bL19 of Methylobacterium sp. (strain 4-46).